Here is a 447-residue protein sequence, read N- to C-terminus: Maltoporin (447 aa).

The N-terminal stretch at 1–26 (MELRMKKVSVIAAAVAATLAAGSAFA) is a signal peptide.

The protein belongs to the porin LamB (TC 1.B.3) family. In terms of assembly, homotrimer formed of three 18-stranded antiparallel beta-barrels, containing three independent channels.

It localises to the cell outer membrane. The enzyme catalyses beta-maltose(in) = beta-maltose(out). In terms of biological role, involved in the transport of maltose and maltodextrins. The protein is Maltoporin of Vibrio campbellii (strain ATCC BAA-1116).